Reading from the N-terminus, the 74-residue chain is Molt-inhibiting hormone (74 aa).

Residue Gln1 is modified to Pyrrolidone carboxylic acid. Intrachain disulfides connect Cys7–Cys43, Cys23–Cys39, and Cys26–Cys52. A Valine amide modification is found at Val72.

It is found in the secreted. In terms of biological role, inhibits Y-organs where molting hormone (ecdysteroid) is secreted. A molting cycle is initiated when MIH secretion diminishes or stops. This chain is Molt-inhibiting hormone, found in Procambarus bouvieri (Mexican crayfish).